A 414-amino-acid chain; its full sequence is 2,3-diketo-5-methylthiopentyl-1-phosphate enolase (414 aa).

Residue Lys-99 is the Proton acceptor of the active site. Residues Lys-148, 174 to 177, His-265, Gly-338, and 360 to 361 contribute to the substrate site; these read KDDE and GG. The Mg(2+) site is built by Lys-174, Asp-176, and Glu-177. Lys-174 is subject to N6-carboxylysine.

Belongs to the RuBisCO large chain family. Type IV subfamily. As to quaternary structure, homodimer. It depends on Mg(2+) as a cofactor.

It carries out the reaction 5-methylsulfanyl-2,3-dioxopentyl phosphate = 2-hydroxy-5-methylsulfanyl-3-oxopent-1-enyl phosphate. It functions in the pathway amino-acid biosynthesis; L-methionine biosynthesis via salvage pathway; L-methionine from S-methyl-5-thio-alpha-D-ribose 1-phosphate: step 3/6. Catalyzes the enolization of 2,3-diketo-5-methylthiopentyl-1-phosphate (DK-MTP-1-P) into 2-hydroxy-3-keto-5-methylthiopentenyl-1-phosphate (HK-MTPenyl-1-P). This chain is 2,3-diketo-5-methylthiopentyl-1-phosphate enolase, found in Bacillus cereus (strain ATCC 14579 / DSM 31 / CCUG 7414 / JCM 2152 / NBRC 15305 / NCIMB 9373 / NCTC 2599 / NRRL B-3711).